The sequence spans 273 residues: Patr class II histocompatibility antigen, DO beta chain (273 aa).

An N-terminal signal peptide occupies residues 1–26; sequence MGSGWVPWVVALLVNLTRLDSSMTQG. The interval 27–120 is beta-1; the sequence is TDSPEDFVIQ…LGAPFTVGRK (94 aa). Topologically, residues 27–224 are extracellular; that stretch reads TDSPEDFVIQ…RAQSEYSWKK (198 aa). 2 disulfides stabilise this stretch: cysteine 41–cysteine 105 and cysteine 143–cysteine 199. Asparagine 45 carries N-linked (GlcNAc...) asparagine glycosylation. Residues 121–214 form a beta-2 region; that stretch reads VQPEVTVYPE…SLLSPVSVEW (94 aa). Positions 123-213 constitute an Ig-like C1-type domain; the sequence is PEVTVYPERT…SSLLSPVSVE (91 aa). The connecting peptide stretch occupies residues 215 to 224; it reads RAQSEYSWKK. The chain crosses the membrane as a helical span at residues 225–245; that stretch reads MLSGIAAFLLGLIFLLVGIVI. At 246–273 the chain is on the cytoplasmic side; the sequence is QLRAQKGYVRTQMSGNEVSRAVLLPQSC.

Belongs to the MHC class II family. As to quaternary structure, heterodimer of an alpha chain (DOA) and a beta chain (DOB). Forms a heterotetrameric complex with an HLA-DM molecule during intracellular transport in endosomal/lysosomal compartments in B-cells.

It is found in the endosome membrane. It localises to the lysosome membrane. Its function is as follows. Important modulator in the HLA class II restricted antigen presentation pathway by interaction with the HLA-DM molecule in B-cells. Modifies peptide exchange activity of HLA-DM. This chain is Patr class II histocompatibility antigen, DO beta chain (Patr-DOB), found in Pan troglodytes (Chimpanzee).